The chain runs to 86 residues: Large ribosomal subunit protein eL20 (86 aa).

This sequence belongs to the eukaryotic ribosomal protein eL20 family. In terms of assembly, part of the 50S ribosomal subunit. Binds 23S rRNA.

The polypeptide is Large ribosomal subunit protein eL20 (Metallosphaera sedula (strain ATCC 51363 / DSM 5348 / JCM 9185 / NBRC 15509 / TH2)).